The sequence spans 307 residues: Myeloid-associated differentiation marker homolog (307 aa).

MARVEL domains are found at residues 15–148 (TLKS…AKPG) and 153–304 (YMAT…RLIF). The next 8 membrane-spanning stretches (helical) occupy residues 19-39 (PVGI…SLVV), 51-71 (LCMF…IVEF), 85-105 (FPIT…VIYP), 123-143 (IVAI…VSLT), 156-176 (TTPG…FVFI), 190-210 (WCLA…ILCV), 228-248 (YALL…IFSF), and 278-298 (MVAV…DLVY).

It belongs to the MAL family.

Its subcellular location is the membrane. The sequence is that of Myeloid-associated differentiation marker homolog (myadm) from Xenopus laevis (African clawed frog).